Consider the following 353-residue polypeptide: MKIVKQDKKEGIVTLVPETLDDLWHLSHIVEVGDSVSSKTTRRIQDNTGDKLRSDRGVKKTFTLRIDVENITFHIFTGKLRLTGVITKGPEDLIPLGSHHTVEVKLNTPITIKKEKWANWALKRLNQAIEASKKLAAIIVLLEDDTATLGLMRQFGIEYYGPIKGSVSGKRIVDKNRSKAIAQFYEKVIESVNKFHDIQNIVVAGPGFVKNDFYDYIKNKHKDLADKAIIESTGSGGRVGIHEVLKKGTVEKLTVENRVASEMVAINNLLEEIGKNSSKVAYGEKETVKAINLGAVKQLLVLDSAVAINDMGNLMDMVENMNGEVMVISSQHEGGEQLKGLGSMAAILRYEIA.

Belongs to the eukaryotic release factor 1 family. Pelota subfamily. Monomer. The cofactor is a divalent metal cation.

The protein resides in the cytoplasm. May function in recognizing stalled ribosomes, interact with stem-loop structures in stalled mRNA molecules, and effect endonucleolytic cleavage of the mRNA. May play a role in the release non-functional ribosomes and degradation of damaged mRNAs. Has endoribonuclease activity. The chain is Protein pelota homolog from Methanobrevibacter smithii (strain ATCC 35061 / DSM 861 / OCM 144 / PS).